Reading from the N-terminus, the 322-residue chain is Quinolinate synthase (322 aa).

Positions 37 and 54 each coordinate iminosuccinate. [4Fe-4S] cluster is bound at residue cysteine 99. Iminosuccinate is bound by residues 125 to 127 (YVN) and serine 142. A [4Fe-4S] cluster-binding site is contributed by cysteine 185. Residues 211 to 213 (HPE) and threonine 228 each bind iminosuccinate. Position 278 (cysteine 278) interacts with [4Fe-4S] cluster.

This sequence belongs to the quinolinate synthase family. Type 2 subfamily. [4Fe-4S] cluster serves as cofactor.

It is found in the cytoplasm. It catalyses the reaction iminosuccinate + dihydroxyacetone phosphate = quinolinate + phosphate + 2 H2O + H(+). Its pathway is cofactor biosynthesis; NAD(+) biosynthesis; quinolinate from iminoaspartate: step 1/1. Catalyzes the condensation of iminoaspartate with dihydroxyacetone phosphate to form quinolinate. The protein is Quinolinate synthase of Chlorobaculum tepidum (strain ATCC 49652 / DSM 12025 / NBRC 103806 / TLS) (Chlorobium tepidum).